The chain runs to 234 residues: Small ribosomal subunit protein uS3 (234 aa).

One can recognise a KH type-2 domain in the interval 39–107; that stretch reads IRKYVKKELY…EIAVNIKEER (69 aa). A compositionally biased stretch (basic and acidic residues) spans 213–222; sequence PTEKAEETTS. Residues 213 to 234 are disordered; the sequence is PTEKAEETTSKPKRRPAKKRGK. Over residues 223–234 the composition is skewed to basic residues; the sequence is KPKRRPAKKRGK.

The protein belongs to the universal ribosomal protein uS3 family. In terms of assembly, part of the 30S ribosomal subunit. Forms a tight complex with proteins S10 and S14.

Functionally, binds the lower part of the 30S subunit head. Binds mRNA in the 70S ribosome, positioning it for translation. In Aliarcobacter butzleri (strain RM4018) (Arcobacter butzleri), this protein is Small ribosomal subunit protein uS3.